The sequence spans 416 residues: UDP-N-acetylmuramoylalanine--D-glutamate ligase (416 aa).

104-110 (GSNGKST) provides a ligand contact to ATP.

This sequence belongs to the MurCDEF family.

The protein resides in the cytoplasm. It catalyses the reaction UDP-N-acetyl-alpha-D-muramoyl-L-alanine + D-glutamate + ATP = UDP-N-acetyl-alpha-D-muramoyl-L-alanyl-D-glutamate + ADP + phosphate + H(+). It participates in cell wall biogenesis; peptidoglycan biosynthesis. Functionally, cell wall formation. Catalyzes the addition of glutamate to the nucleotide precursor UDP-N-acetylmuramoyl-L-alanine (UMA). This Francisella tularensis subsp. mediasiatica (strain FSC147) protein is UDP-N-acetylmuramoylalanine--D-glutamate ligase.